Consider the following 235-residue polypeptide: Phosphoribosylaminoimidazole-succinocarboxamide synthase (235 aa).

This sequence belongs to the SAICAR synthetase family.

The catalysed reaction is 5-amino-1-(5-phospho-D-ribosyl)imidazole-4-carboxylate + L-aspartate + ATP = (2S)-2-[5-amino-1-(5-phospho-beta-D-ribosyl)imidazole-4-carboxamido]succinate + ADP + phosphate + 2 H(+). It participates in purine metabolism; IMP biosynthesis via de novo pathway; 5-amino-1-(5-phospho-D-ribosyl)imidazole-4-carboxamide from 5-amino-1-(5-phospho-D-ribosyl)imidazole-4-carboxylate: step 1/2. The polypeptide is Phosphoribosylaminoimidazole-succinocarboxamide synthase (Streptococcus pneumoniae (strain ATCC 700669 / Spain 23F-1)).